The sequence spans 147 residues: Globin (147 aa).

A Globin domain is found at 1–147; the sequence is GLDGAQKTAL…LLTMLIKAHV (147 aa). Heme b-binding residues include His-66 and His-98.

Belongs to the globin family. In terms of assembly, homodimer.

It localises to the cytoplasm. In Busycotypus canaliculatus (Channeled whelk), this protein is Globin.